The primary structure comprises 1192 residues: Pyruvate carboxylase (1192 aa).

Positions 1–23 (MAAPRQPEEAVDDTEFIDDHHDQ) are disordered. The 453-residue stretch at 40–492 (QFQKILVANR…WTTFIDDTPE (453 aa)) folds into the Biotin carboxylation domain. ATP contacts are provided by lysine 158, glutamate 242, and histidine 277. One can recognise an ATP-grasp domain in the interval 162–359 (RQLAIRCDVP…IVAAQIQIAA (198 aa)). The active site involves arginine 334. One can recognise a Pyruvate carboxyltransferase domain in the interval 578–846 (CLIMDTTWRD…DPGLNSAQVR (269 aa)). Residues 586 to 590 (RDAHQ) and arginine 659 each bind substrate. An a divalent metal cation-binding site is contributed by aspartate 587. A divalent metal cation is bound by residues lysine 755, histidine 785, and histidine 787. Lysine 755 carries the N6-carboxylysine modification. Threonine 920 serves as a coordination point for substrate. In terms of domain architecture, Biotinyl-binding spans 1115 to 1190 (KAELGDSSQV…DGQDLVCKIV (76 aa)). Lysine 1156 carries the N6-biotinyllysine modification.

Requires biotin as cofactor. Zn(2+) is required as a cofactor.

Its subcellular location is the cytoplasm. The catalysed reaction is hydrogencarbonate + pyruvate + ATP = oxaloacetate + ADP + phosphate + H(+). It participates in carbohydrate biosynthesis; gluconeogenesis. Pyruvate carboxylase catalyzes a 2-step reaction, involving the ATP-dependent carboxylation of the covalently attached biotin in the first step and the transfer of the carboxyl group to pyruvate in the second. This Aspergillus niger protein is Pyruvate carboxylase (pyc).